The sequence spans 71 residues: Small ribosomal subunit protein bS21 (71 aa).

Belongs to the bacterial ribosomal protein bS21 family.

The polypeptide is Small ribosomal subunit protein bS21 (Psychromonas ingrahamii (strain DSM 17664 / CCUG 51855 / 37)).